A 115-amino-acid polypeptide reads, in one-letter code: UPF0102 protein NMA0341 (115 aa).

This sequence belongs to the UPF0102 family.

This chain is UPF0102 protein NMA0341, found in Neisseria meningitidis serogroup A / serotype 4A (strain DSM 15465 / Z2491).